Reading from the N-terminus, the 406-residue chain is Dematin (406 aa).

Disordered regions lie at residues 1 to 30 (MERL…PSSI) and 78 to 333 (LPRS…DRGN). The span at 11 to 29 (SPGSVSSSRDSSVPGSPSS) shows a compositional bias: low complexity. 10 positions are modified to phosphoserine: serine 16, serine 18, serine 26, serine 92, serine 96, serine 105, serine 110, serine 113, serine 157, and serine 227. Residues 105-114 (SPGTISQASA) show a composition bias toward polar residues. A compositionally biased stretch (acidic residues) spans 217–228 (EEEEEEEDDDSG). The interaction with RASGRF2 stretch occupies residues 225–309 (DDSGEEMKAL…SRLQSTDFSP (85 aa)). Basic and acidic residues-rich tracts occupy residues 229–243 (EEMK…EELS) and 253–262 (ILKEEMEKSL). 8 positions are modified to phosphoserine: serine 270, serine 280, serine 290, serine 304, serine 316, serine 334, serine 373, and serine 384. The segment covering 282-323 (HAGTSKSSSLPAYGRTTLSRLQSTDFSPSGSEAESPGLQNGE) has biased composition (polar residues). The HP domain maps to 338–406 (VLEQKIYPYE…NELKKKASLF (69 aa)). Serine 404 bears the Phosphoserine; by PKA mark.

The protein belongs to the villin/gelsolin family. As to quaternary structure, monomeric; under reducing conditions. Self-associates. Exists under oxidizing condition as a trimer linked by disulfide bonds. Found in a complex with DMTN, F-actin and spectrin. Found in a complex with ADD2, DMTN and SLC2A1. Interacts with F-actin, ITPKB and spectrin. Interacts with SLC2A1 (via C-terminus cytoplasmic region). Interacts with RASGRF2. Post-translationally, phosphorylated. Phosphorylation at Ser-404 by PKA causes the C-terminal headpiece domain to associate with the N-terminal core domain, and leads to the inhibition of its actin bundling activity.

It is found in the cytoplasm. The protein localises to the cytosol. The protein resides in the perinuclear region. It localises to the cytoskeleton. Its subcellular location is the cell membrane. It is found in the membrane. The protein localises to the endomembrane system. The protein resides in the cell projection. Membrane-cytoskeleton-associated protein with F-actin-binding activity that induces F-actin bundles formation and stabilization. Its F-actin-bundling activity is reversibly regulated upon its phosphorylation by the cAMP-dependent protein kinase A (PKA). Binds to the erythrocyte membrane glucose transporter-1 SLC2A1/GLUT1, and hence stabilizes and attaches the spectrin-actin network to the erythrocytic plasma membrane. Plays a role in maintaining the functional integrity of PKA-activated erythrocyte shape and the membrane mechanical properties. Also plays a role as a modulator of actin dynamics in fibroblasts; acts as a negative regulator of the RhoA activation pathway. In platelets, functions as a regulator of internal calcium mobilization across the dense tubular system that affects platelet granule secretion pathways and aggregation. Also required for the formation of a diverse set of cell protrusions, such as filopodia and lamellipodia, necessary for platelet cell spreading, motility and migration. Acts as a tumor suppressor and inhibits malignant cell transformation. The protein is Dematin (DMTN) of Bos taurus (Bovine).